We begin with the raw amino-acid sequence, 330 residues long: tRNA U34 carboxymethyltransferase (330 aa).

Residues Lys91, Trp105, Lys110, Gly130, 152–154, 181–182, Met196, Tyr200, and Arg315 each bind carboxy-S-adenosyl-L-methionine; these read DPS and IE.

Belongs to the class I-like SAM-binding methyltransferase superfamily. CmoB family. Homotetramer.

It carries out the reaction carboxy-S-adenosyl-L-methionine + 5-hydroxyuridine(34) in tRNA = 5-carboxymethoxyuridine(34) in tRNA + S-adenosyl-L-homocysteine + H(+). In terms of biological role, catalyzes carboxymethyl transfer from carboxy-S-adenosyl-L-methionine (Cx-SAM) to 5-hydroxyuridine (ho5U) to form 5-carboxymethoxyuridine (cmo5U) at position 34 in tRNAs. This Shewanella amazonensis (strain ATCC BAA-1098 / SB2B) protein is tRNA U34 carboxymethyltransferase.